A 113-amino-acid polypeptide reads, in one-letter code: Flagellar hook-basal body complex protein FliE (113 aa).

This sequence belongs to the FliE family.

The protein resides in the bacterial flagellum basal body. The protein is Flagellar hook-basal body complex protein FliE of Rhizobium etli (strain CIAT 652).